We begin with the raw amino-acid sequence, 186 residues long: Protein GrpE (186 aa).

The segment covering 1–17 (MKDEHNQEHDLSQKELE) has biased composition (basic and acidic residues). The segment at 1-32 (MKDEHNQEHDLSQKELESCENSCTCEGKKQEA) is disordered.

This sequence belongs to the GrpE family. As to quaternary structure, homodimer.

Its subcellular location is the cytoplasm. Functionally, participates actively in the response to hyperosmotic and heat shock by preventing the aggregation of stress-denatured proteins, in association with DnaK and GrpE. It is the nucleotide exchange factor for DnaK and may function as a thermosensor. Unfolded proteins bind initially to DnaJ; upon interaction with the DnaJ-bound protein, DnaK hydrolyzes its bound ATP, resulting in the formation of a stable complex. GrpE releases ADP from DnaK; ATP binding to DnaK triggers the release of the substrate protein, thus completing the reaction cycle. Several rounds of ATP-dependent interactions between DnaJ, DnaK and GrpE are required for fully efficient folding. This chain is Protein GrpE, found in Helicobacter acinonychis (strain Sheeba).